The primary structure comprises 539 residues: GMP synthase [glutamine-hydrolyzing] (539 aa).

A Glutamine amidotransferase type-1 domain is found at 4-202; it reads KILILDFGSQ…VLQIAGAKPD (199 aa). The Nucleophile role is filled by Cys81. Active-site residues include His176 and Glu178. The 193-residue stretch at 203–395 folds into the GMPS ATP-PPase domain; sequence WIMKNHIEEA…LGLPPEMVYR (193 aa). 230-236 contributes to the ATP binding site; that stretch reads SGGVDSS.

As to quaternary structure, homodimer.

The catalysed reaction is XMP + L-glutamine + ATP + H2O = GMP + L-glutamate + AMP + diphosphate + 2 H(+). It participates in purine metabolism; GMP biosynthesis; GMP from XMP (L-Gln route): step 1/1. Functionally, catalyzes the synthesis of GMP from XMP. This chain is GMP synthase [glutamine-hydrolyzing], found in Burkholderia vietnamiensis (strain G4 / LMG 22486) (Burkholderia cepacia (strain R1808)).